Consider the following 301-residue polypeptide: Lipoyl synthase (301 aa).

Residues cysteine 37, cysteine 42, cysteine 48, cysteine 63, cysteine 67, cysteine 70, and serine 276 each contribute to the [4Fe-4S] cluster site. Residues tryptophan 49–leucine 265 enclose the Radical SAM core domain.

This sequence belongs to the radical SAM superfamily. Lipoyl synthase family. The cofactor is [4Fe-4S] cluster.

The protein localises to the cytoplasm. The enzyme catalyses [[Fe-S] cluster scaffold protein carrying a second [4Fe-4S](2+) cluster] + N(6)-octanoyl-L-lysyl-[protein] + 2 oxidized [2Fe-2S]-[ferredoxin] + 2 S-adenosyl-L-methionine + 4 H(+) = [[Fe-S] cluster scaffold protein] + N(6)-[(R)-dihydrolipoyl]-L-lysyl-[protein] + 4 Fe(3+) + 2 hydrogen sulfide + 2 5'-deoxyadenosine + 2 L-methionine + 2 reduced [2Fe-2S]-[ferredoxin]. It participates in protein modification; protein lipoylation via endogenous pathway; protein N(6)-(lipoyl)lysine from octanoyl-[acyl-carrier-protein]: step 2/2. Its function is as follows. Catalyzes the radical-mediated insertion of two sulfur atoms into the C-6 and C-8 positions of the octanoyl moiety bound to the lipoyl domains of lipoate-dependent enzymes, thereby converting the octanoylated domains into lipoylated derivatives. The polypeptide is Lipoyl synthase (Rickettsia felis (strain ATCC VR-1525 / URRWXCal2) (Rickettsia azadi)).